Here is a 599-residue protein sequence, read N- to C-terminus: Probable acetolactate synthase large subunit (599 aa).

Glu47 is a thiamine diphosphate binding site. FAD contacts are provided by residues Arg149, 258–279, and 301–320; these read HGTK…IGCR and DIDP…IVGD. Residues 404–484 are thiamine pyrophosphate binding; sequence QNQMWMAHYF…VVICIFDNRT (81 aa). 2 residues coordinate Mg(2+): Asp455 and Asn482.

It belongs to the TPP enzyme family. Dimer of large and small chains. Requires Mg(2+) as cofactor. The cofactor is thiamine diphosphate.

The catalysed reaction is 2 pyruvate + H(+) = (2S)-2-acetolactate + CO2. Its pathway is amino-acid biosynthesis; L-isoleucine biosynthesis; L-isoleucine from 2-oxobutanoate: step 1/4. It participates in amino-acid biosynthesis; L-valine biosynthesis; L-valine from pyruvate: step 1/4. This chain is Probable acetolactate synthase large subunit (ilvB), found in Methanococcus aeolicus.